We begin with the raw amino-acid sequence, 153 residues long: Ribosome-binding factor A (153 aa).

Positions 116 to 153 (DAQVAEQAQGAQYAAGEDAYRTPSDEDDAEGPESAPRV) are disordered. The segment covering 119–132 (VAEQAQGAQYAAGE) has biased composition (low complexity).

This sequence belongs to the RbfA family. As to quaternary structure, monomer. Binds 30S ribosomal subunits, but not 50S ribosomal subunits or 70S ribosomes.

It localises to the cytoplasm. In terms of biological role, one of several proteins that assist in the late maturation steps of the functional core of the 30S ribosomal subunit. Associates with free 30S ribosomal subunits (but not with 30S subunits that are part of 70S ribosomes or polysomes). Required for efficient processing of 16S rRNA. May interact with the 5'-terminal helix region of 16S rRNA. This chain is Ribosome-binding factor A, found in Kocuria rhizophila (strain ATCC 9341 / DSM 348 / NBRC 103217 / DC2201).